A 414-amino-acid chain; its full sequence is Riboflavin biosynthesis protein RibBA (414 aa).

A DHBP synthase region spans residues 1-204 (MTRFDTIERA…IADMIAWRRK (204 aa)). Residues 28–29 (RE), D33, 141–145 (RPGHT), and E165 each bind D-ribulose 5-phosphate. E29 is a Mg(2+) binding site. Residue H144 participates in Mg(2+) binding. Residues 205-414 (HEKQVVRVAE…DDLDLGETAQ (210 aa)) are GTP cyclohydrolase II. 255–259 (RVHSE) contributes to the GTP binding site. Residues C260, C271, and C273 each coordinate Zn(2+). GTP-binding positions include Q276, 299-301 (EGR), and T321. D333 acts as the Proton acceptor; for GTP cyclohydrolase activity in catalysis. The Nucleophile; for GTP cyclohydrolase activity role is filled by R335. T356 and K361 together coordinate GTP.

This sequence in the N-terminal section; belongs to the DHBP synthase family. The protein in the C-terminal section; belongs to the GTP cyclohydrolase II family. It depends on Mg(2+) as a cofactor. The cofactor is Mn(2+). Zn(2+) serves as cofactor.

It carries out the reaction D-ribulose 5-phosphate = (2S)-2-hydroxy-3-oxobutyl phosphate + formate + H(+). The enzyme catalyses GTP + 4 H2O = 2,5-diamino-6-hydroxy-4-(5-phosphoribosylamino)-pyrimidine + formate + 2 phosphate + 3 H(+). It functions in the pathway cofactor biosynthesis; riboflavin biosynthesis; 2-hydroxy-3-oxobutyl phosphate from D-ribulose 5-phosphate: step 1/1. It participates in cofactor biosynthesis; riboflavin biosynthesis; 5-amino-6-(D-ribitylamino)uracil from GTP: step 1/4. Its function is as follows. Catalyzes the conversion of D-ribulose 5-phosphate to formate and 3,4-dihydroxy-2-butanone 4-phosphate. Catalyzes the conversion of GTP to 2,5-diamino-6-ribosylamino-4(3H)-pyrimidinone 5'-phosphate (DARP), formate and pyrophosphate. This is Riboflavin biosynthesis protein RibBA from Nocardia farcinica (strain IFM 10152).